A 589-amino-acid chain; its full sequence is MALATQSNRIKIGIRPTIDGRRMGVRESLETQTIRMAQSVAQLLQTHIRYTDSTFVECVVADSTIGGVAEAAACADKFKRENVGLTITVTPCWCYGSETIDMDPHMPKAIWGFNGTERPGAVYLAAALAGHSQLGLPAFSIYGTEVQEADDTNIPEDVKEKLLRFARAGLAVASIRGKSYLSIGSVSMGIAGSIVNQAFFQEYLGMRNEYVDMMEIKRRLDRKIYDQEEVDLALSWVKQYCKEGVDVNSLENQRNAEERAELWENVVKMTIITRDLMVGNPKLATLNYAEEALGHNAIAAGFQGQRHWTDHLPNGDFMEAMLNSTYDWNGVRPPYILATENDSLNAIGMLFGHQLTGKAQIFADVRTYWSQDSVERVTGWRPESGFIHLINSGSAALDGTGEHQDAQGNPTLKPAWDVTEEEAKRCLENTRWCPAVHEYFRGGGLSSQFLTKGGIPFTMHRINLIKGLGPVLQIAEGWSIDLPQDVHNKLNQRTNETWPTTWFVPRLTGKGAFTDVYSVMANWGANHCVATHGHVGADLITLASMLRIPVCMHNVSEKNIFRPSAWNGFGQDKEGQDYRACQNFGPLYK.

Catalysis depends on proton acceptor residues glutamate 340 and aspartate 364. Mn(2+) contacts are provided by glutamate 340, aspartate 364, and histidine 527.

Belongs to the L-fucose isomerase family. The cofactor is Mn(2+).

The protein resides in the cytoplasm. The enzyme catalyses L-fucose = L-fuculose. It functions in the pathway carbohydrate degradation; L-fucose degradation; L-lactaldehyde and glycerone phosphate from L-fucose: step 1/3. Its function is as follows. Converts the aldose L-fucose into the corresponding ketose L-fuculose. The protein is L-fucose isomerase of Haemophilus influenzae (strain PittEE).